The primary structure comprises 125 residues: Alpha-endosulfine (125 aa).

The span at 1-37 (MSDKYIGDSHLEETGEEKQDSQEKEAVTPEKAEEQKL) shows a compositional bias: basic and acidic residues. Residues 1 to 53 (MSDKYIGDSHLEETGEEKQDSQEKEAVTPEKAEEQKLKAKYPNLGQKPGGSDF) are disordered. Residue threonine 28 is modified to Phosphothreonine; by CDK2. Serine 67 is subject to Phosphoserine; by GWL. The interval 81-108 (QLPCAGPDKNLVTGDHIPTPQDLPQRKS) is disordered. Threonine 99 carries the phosphothreonine; by CDK2 modification. Phosphoserine; by PKA is present on serine 109.

This sequence belongs to the endosulfine family. Post-translationally, phosphorylation at Ser-67 by gwl during mitosis is essential for interaction with ppp2r2d (PR55-delta) and subsequent inactivation of PP2A.

It is found in the cytoplasm. Its function is as follows. Protein phosphatase inhibitor that specifically inhibits protein phosphatase 2A (PP2A) during mitosis. When phosphorylated at Ser-67 during mitosis, specifically interacts with ppp2r2d (PR55-delta) and inhibits its activity, leading to inactivation of PP2A, an essential condition to keep cyclin-B1-CDK1 activity high during M phase. The sequence is that of Alpha-endosulfine (ensa) from Xenopus tropicalis (Western clawed frog).